The chain runs to 255 residues: DNA repair protein RecO (255 aa).

The protein belongs to the RecO family.

Involved in DNA repair and RecF pathway recombination. The protein is DNA repair protein RecO of Bacillus velezensis (strain DSM 23117 / BGSC 10A6 / LMG 26770 / FZB42) (Bacillus amyloliquefaciens subsp. plantarum).